Consider the following 448-residue polypeptide: Guanine deaminase (448 aa).

Zn(2+) is bound by residues histidine 74 and histidine 76. Substrate-binding positions include 76–79, 204–205, 231–234, and aspartate 319; these read HAPQ, RF, and HISE. Zn(2+)-binding residues include histidine 231 and aspartate 319.

This sequence belongs to the metallo-dependent hydrolases superfamily. ATZ/TRZ family. Requires Zn(2+) as cofactor.

The enzyme catalyses guanine + H2O + H(+) = xanthine + NH4(+). The protein operates within purine metabolism; guanine degradation; xanthine from guanine: step 1/1. With respect to regulation, strongly inhibited by p-chloromercuribenzoate (PCMB). Potassium cyanide (KCN) strongly inhibits activity towards 7,8-dihydropterin but has almost no effect on activity towards guanine. Pterin inhibits activity towards guanine but has little effect on activity towards 7,8-dihydropterin. Functionally, catalyzes the hydrolytic deamination of guanine, producing xanthine and ammonia. Also has 7,8-dihydropterin deaminase activity, which plays a role in synthesis of the red eye pigment aurodrosopterin. In Drosophila melanogaster (Fruit fly), this protein is Guanine deaminase.